A 183-amino-acid polypeptide reads, in one-letter code: DELTA-miturgitoxin-Cp1a (183 aa).

The N-terminal stretch at 1–20 (MKFSLFFSVFFLAVLHACLS) is a signal peptide. Positions 21 to 47 (ESEIDLEDEEHFMSSDSFLSEIQDESR) are excised as a propeptide. Positions 44–47 (DESR) match the Processing quadruplet motif motif. Cystine bridges form between Cys-51/Cys-66, Cys-58/Cys-75, Cys-65/Cys-88, Cys-77/Cys-86, Cys-115/Cys-130, Cys-122/Cys-139, Cys-129/Cys-157, and Cys-141/Cys-155. Domain repeat units follow at residues 51 to 77 (CIER…KCTC) and 115 to 141 (CVPK…QCKC). The interval 51–141 (CIERNKECTN…GGIFKYQCKC (91 aa)) is 2 X approximate repeats with cysteine pattern C-C-CC-C-C. The tract at residues 164–177 (QAIEGALRIAKKLI) is predicted alpha-helix. A Tryptophan amide modification is found at Trp-181.

The protein belongs to the neurotoxin 19 (CSTX) family. Double-CSTX subfamily. In terms of processing, cleavage of the propeptide depends on the processing quadruplet motif (XXXR, with at least one of X being E). As to expression, expressed by the venom gland.

Its subcellular location is the secreted. It is found in the target cell membrane. Its function is as follows. Spider venom toxin that exhibits cytolytic activity by forming an alpha-helix across the membrane. Lethal to insect larvae. Causes instant paralysis and death in the larvae of the flesh fly (S.carnaria) at doses of 20 ug/g, at doses of less than 10 ug/g causes reversible paralysis. Has cytolytic activity against insect Sf9 cells. Causes stable and irreversible depolarization of fly muscle fibers, leading to contracture at higher toxin concentrations. Destabilizes membranes. This Cheiracanthium punctorium (Yellow sac spider) protein is DELTA-miturgitoxin-Cp1a.